The following is a 670-amino-acid chain: C6 finger domain transcription factor iacK (670 aa).

The disordered stretch occupies residues 1–84 (MNTSPDYAQP…GEPKQSGPTV (84 aa)). The segment covering 44 to 54 (GPPPPPPPPPT) has biased composition (pro residues). Positions 55–74 (ATATAATAAATTTTAAPSAT) are enriched in low complexity. A DNA-binding region (zn(2)-C6 fungal-type) is located at residues 88 to 114 (CLACRSKHLKCDGGNPCARCQASESIC). A disordered region spans residues 122–157 (GYKGPRRNGTQNPNKRHAAASDDGSPNSNGSNESCP). Low complexity predominate over residues 142-155 (SDDGSPNSNGSNES).

Its subcellular location is the nucleus. Functionally, transcription factor; part of the gene cluster that mediates the biosynthesis of iso-A82775C, a enylepoxycyclohexane and biosynthetic precursor of the chloropestolide anticancer natural products. In Pestalotiopsis fici (strain W106-1 / CGMCC3.15140), this protein is C6 finger domain transcription factor iacK.